The sequence spans 117 residues: Large ribosomal subunit protein bL20 (117 aa).

This sequence belongs to the bacterial ribosomal protein bL20 family.

Binds directly to 23S ribosomal RNA and is necessary for the in vitro assembly process of the 50S ribosomal subunit. It is not involved in the protein synthesizing functions of that subunit. This chain is Large ribosomal subunit protein bL20, found in Gloeothece citriformis (strain PCC 7424) (Cyanothece sp. (strain PCC 7424)).